Consider the following 152-residue polypeptide: MATEEDVKQRQIIESRARNISHNVRCTECGSQSIEDSQADIAILLRKLIRDEIKSGKSDKEIYKKLQADYGETILYTPKFDLQTAAIWLSPVIVGGVAAGVWAYKKHRQRTNVHIMALNLVRGVPLTPREKETMLDVLTPPPPANKWWWPGK.

The Mitochondrial intermembrane portion of the chain corresponds to 1 to 83 (MATEEDVKQR…ILYTPKFDLQ (83 aa)). Heme is bound by residues Cys26 and Cys29. Residues 84 to 104 (TAAIWLSPVIVGGVAAGVWAY) form a helical membrane-spanning segment. Topologically, residues 105–152 (KKHRQRTNVHIMALNLVRGVPLTPREKETMLDVLTPPPPANKWWWPGK) are mitochondrial matrix.

The protein belongs to the CcmH/CycL/Ccl2/NrfF family.

It localises to the mitochondrion inner membrane. In terms of biological role, plays a role in mitochondrial cytochrome c maturation. Probable component of a heme lyase complex involved in the reduction of apocytochrome c. The polypeptide is Cytochrome c-type biogenesis CcmH-like mitochondrial protein (Oryza sativa subsp. indica (Rice)).